Reading from the N-terminus, the 179-residue chain is Peptide deformylase (179 aa).

Cys-102 and His-144 together coordinate Fe cation. The active site involves Glu-145. His-148 contributes to the Fe cation binding site.

Belongs to the polypeptide deformylase family. Requires Fe(2+) as cofactor.

The catalysed reaction is N-terminal N-formyl-L-methionyl-[peptide] + H2O = N-terminal L-methionyl-[peptide] + formate. In terms of biological role, removes the formyl group from the N-terminal Met of newly synthesized proteins. Requires at least a dipeptide for an efficient rate of reaction. N-terminal L-methionine is a prerequisite for activity but the enzyme has broad specificity at other positions. This chain is Peptide deformylase, found in Wolbachia pipientis wMel.